Reading from the N-terminus, the 292-residue chain is uncharacterized protein (292 aa).

Residues 1-19 (MFKKYIFILLLLVTSIVKA) form the signal peptide. Residues 271 to 292 (KRNNPPLKTNNAKSKNPYDQSK) are disordered.

This is an uncharacterized protein from Rickettsia bellii (strain RML369-C).